We begin with the raw amino-acid sequence, 164 residues long: FMN reductase (NADH) RutF (164 aa).

This sequence belongs to the non-flavoprotein flavin reductase family. RutF subfamily.

It catalyses the reaction FMNH2 + NAD(+) = FMN + NADH + 2 H(+). Its function is as follows. Catalyzes the reduction of FMN to FMNH2 which is used to reduce pyrimidine by RutA via the Rut pathway. The chain is FMN reductase (NADH) RutF from Shigella flexneri serotype X (strain 2002017).